A 459-amino-acid chain; its full sequence is Bifunctional protein GlmU (459 aa).

The pyrophosphorylase stretch occupies residues 1–230 (MSNRFAVILA…FDETLGVNDR (230 aa)). Residues 9 to 12 (LAAG), Lys-23, Gln-73, and 78 to 79 (GT) contribute to the UDP-N-acetyl-alpha-D-glucosamine site. Asp-103 serves as a coordination point for Mg(2+). Residues Gly-140, Glu-155, Asn-170, and Asn-228 each coordinate UDP-N-acetyl-alpha-D-glucosamine. Asn-228 lines the Mg(2+) pocket. Residues 231 to 251 (VALSQAEIIMKNRINRKNMVN) are linker. An N-acetyltransferase region spans residues 252 to 459 (GVTIIDPSNT…VDQLLNKKKS (208 aa)). The UDP-N-acetyl-alpha-D-glucosamine site is built by Arg-333 and Lys-351. The active-site Proton acceptor is His-363. Positions 366 and 377 each coordinate UDP-N-acetyl-alpha-D-glucosamine. Acetyl-CoA contacts are provided by residues 386-387 (NY), Ala-423, and Arg-440.

This sequence in the N-terminal section; belongs to the N-acetylglucosamine-1-phosphate uridyltransferase family. The protein in the C-terminal section; belongs to the transferase hexapeptide repeat family. Homotrimer. It depends on Mg(2+) as a cofactor.

Its subcellular location is the cytoplasm. The enzyme catalyses alpha-D-glucosamine 1-phosphate + acetyl-CoA = N-acetyl-alpha-D-glucosamine 1-phosphate + CoA + H(+). It catalyses the reaction N-acetyl-alpha-D-glucosamine 1-phosphate + UTP + H(+) = UDP-N-acetyl-alpha-D-glucosamine + diphosphate. Its pathway is nucleotide-sugar biosynthesis; UDP-N-acetyl-alpha-D-glucosamine biosynthesis; N-acetyl-alpha-D-glucosamine 1-phosphate from alpha-D-glucosamine 6-phosphate (route II): step 2/2. The protein operates within nucleotide-sugar biosynthesis; UDP-N-acetyl-alpha-D-glucosamine biosynthesis; UDP-N-acetyl-alpha-D-glucosamine from N-acetyl-alpha-D-glucosamine 1-phosphate: step 1/1. It functions in the pathway bacterial outer membrane biogenesis; LPS lipid A biosynthesis. Catalyzes the last two sequential reactions in the de novo biosynthetic pathway for UDP-N-acetylglucosamine (UDP-GlcNAc). The C-terminal domain catalyzes the transfer of acetyl group from acetyl coenzyme A to glucosamine-1-phosphate (GlcN-1-P) to produce N-acetylglucosamine-1-phosphate (GlcNAc-1-P), which is converted into UDP-GlcNAc by the transfer of uridine 5-monophosphate (from uridine 5-triphosphate), a reaction catalyzed by the N-terminal domain. The chain is Bifunctional protein GlmU from Bacillus cereus (strain AH187).